Consider the following 302-residue polypeptide: HTH-type transcriptional regulator AlsR (302 aa).

The HTH lysR-type domain maps to Met-1–Thr-58. Residues Phe-18–Lys-37 constitute a DNA-binding region (H-T-H motif).

Belongs to the LysR transcriptional regulatory family.

Its function is as follows. Regulates the expression of the alsSD operon for acetoin biosynthesis. The polypeptide is HTH-type transcriptional regulator AlsR (alsR) (Bacillus subtilis (strain 168)).